A 728-amino-acid chain; its full sequence is MSTEPKCPFHHTAGSGTSNKDWWPNQINLNILHRHSSLSDPMDKDFNYAEAFKQLDLAAVKRDLHALMTTSQDWWPADFGHYGGLFIRMAWHSAGTYRIADGRGGAGGGQQRFAPLNSWPDNANLDKARRLLWPIKQKYGRNISWADLLILTGNVALESMGFKTFGYAGGRPDTWEPDDVYWGSEKIWLELSGGPNSRYSGNRELENPLAAVQMGLIYVNPEGPDGNPDPVAAARDIRETFARMAMNDEETVALIAGGHTFGKTHGAGPASSVGPEPEAAALEQQGLGWQSTFGTGKGKDAITSGLEVTWTSTPTKWSNDFFKHLFSYEWELTKSPAGAHQWVAKDAEAVIPDAFDPSKKHRPTMLTTDLALRFDPEYEKISRRFYEHPDQFADAFARAWFKLTHRDMGPRSRYLGPDVPAEELLWQDPVPAVDHPLIDEADIAALKAKVLASGLSVSQLVSTAWASASTFRGSDKRGGANGARIRLAPQKDWEVNRPAELAAVLETLEGVRKAFNDAQTGGKRVSLADLIVLAGAAGVEQAAKNAGVAVTVPFAPGRTDASQEQTDVHAMAVLEPVADGFRNYLKRKFKTPAEALLVDKAQLLTLTAPEMTVLVGGMRVLGTNVGDPKHGVFTERPGTLTNDFFVNLLDMRTEWKPASADNDVFEGRDRATGELKWTGTRVDLVFGSHSQLRALAEVYGSADAQQKFVHDFVAAWNKVMNLDRFDLV.

The tryptophyl-tyrosyl-methioninium (Trp-Tyr) (with M-244) cross-link spans 91-218; it reads WHSAGTYRIA…LAAVQMGLIY (128 aa). H92 acts as the Proton acceptor in catalysis. Positions 218-244 form a cross-link, tryptophyl-tyrosyl-methioninium (Tyr-Met) (with W-91); sequence YVNPEGPDGNPDPVAAARDIRETFARM. Residue H259 participates in heme b binding.

It belongs to the peroxidase family. Peroxidase/catalase subfamily. Homodimer or homotetramer. Requires heme b as cofactor. Post-translationally, formation of the three residue Trp-Tyr-Met cross-link is important for the catalase, but not the peroxidase activity of the enzyme.

The catalysed reaction is H2O2 + AH2 = A + 2 H2O. The enzyme catalyses 2 H2O2 = O2 + 2 H2O. Its function is as follows. Bifunctional enzyme with both catalase and broad-spectrum peroxidase activity. The protein is Catalase-peroxidase of Burkholderia multivorans (strain ATCC 17616 / 249).